A 400-amino-acid chain; its full sequence is Trans-enoyl reductase ucsL (400 aa).

50-53 (TDHK) contacts NADP(+). 145-152 (SVHGSVAL) provides a ligand contact to substrate. Residues 204 to 207 (STAC), 227 to 230 (SPRN), Tyr-245, and 292 to 293 (LE) contribute to the NADP(+) site. A substrate-binding site is contributed by 313–317 (GPVMF). 389–390 (VS) lines the NADP(+) pocket.

This sequence belongs to the zinc-containing alcohol dehydrogenase family. As to quaternary structure, monomer.

The protein operates within mycotoxin biosynthesis. Trans-enoyl reductase; part of the gene cluster that mediates the biosynthesis of UCS1025A, a member of the pyrrolizidinone family that acts as a strong telomerase inhibitor and displays potent antibacterial and antitumor properties. These compounds share a hemiaminal-containing pyrrolizidinone core fused with a gamma-lactone, giving a furopyrrolizidine that is connected to a decalin fragment. The polyketide synthase module (PKS) of the PKS-NRPS ucsA is responsible for the synthesis of the polyketide backbone via the condensation of an acetyl-CoA starter unit with 6 malonyl-CoA units. The downstream nonribosomal peptide synthetase (NRPS) module then amidates the carboxyl end of the polyketide with a 2S,3S-methylproline derived from L-isoleucine by the 2-oxoglutarate-dependent dioxygenase ucsF which converts L-isoleucine to (4S,5S)-4-methylpyrroline-5-carboxylate that is further converted to 2S,3S-methylproline by the pyrroline-5-carboxylate reductase ucsG. Reductive release of the completed aminoacyl polyketide from the assembly line can form the 3-pyrrolin-2-one structure via an intramolecular Knoevenagel reaction. Because ucsA lacks a designated enoylreductase (ER) domain, the required activity is provided the enoyl reductase ucsL. This keto acyclic precursor is the substrate of the Diels-Alderase ucsH, that catalyzes the Diels-Alder cycloaddition. Oxidation of the 3S-methyl group to a carboxylate by the cytochrome P450 monooxygenase ucsK allows an oxa-Michael cyclization that might involve the reductase/dehydrogenase ucsI and which furnishes the furopyrrolizidine. The oxidase ucsJ likely plays a critical role in stereoselective reduction of the C5-C6 double bond to afford the required R-configured carboxylate group. Further enolization and oxidation at C5 by an unidentified enzyme affords the last intermediate that can undergo oxa-Michael cyclization to yield UCS1025A. This Acremonium sp protein is Trans-enoyl reductase ucsL.